The sequence spans 476 residues: Aspartyl/glutamyl-tRNA(Asn/Gln) amidotransferase subunit B 1 (476 aa).

This sequence belongs to the GatB/GatE family. GatB subfamily. Heterotrimer of A, B and C subunits.

The enzyme catalyses L-glutamyl-tRNA(Gln) + L-glutamine + ATP + H2O = L-glutaminyl-tRNA(Gln) + L-glutamate + ADP + phosphate + H(+). The catalysed reaction is L-aspartyl-tRNA(Asn) + L-glutamine + ATP + H2O = L-asparaginyl-tRNA(Asn) + L-glutamate + ADP + phosphate + 2 H(+). In terms of biological role, allows the formation of correctly charged Asn-tRNA(Asn) or Gln-tRNA(Gln) through the transamidation of misacylated Asp-tRNA(Asn) or Glu-tRNA(Gln) in organisms which lack either or both of asparaginyl-tRNA or glutaminyl-tRNA synthetases. The reaction takes place in the presence of glutamine and ATP through an activated phospho-Asp-tRNA(Asn) or phospho-Glu-tRNA(Gln). This is Aspartyl/glutamyl-tRNA(Asn/Gln) amidotransferase subunit B 1 (gatB1) from Clostridium acetobutylicum (strain ATCC 824 / DSM 792 / JCM 1419 / IAM 19013 / LMG 5710 / NBRC 13948 / NRRL B-527 / VKM B-1787 / 2291 / W).